Consider the following 289-residue polypeptide: Porin (289 aa).

Homotrimer.

The protein resides in the cell outer membrane. Its function is as follows. Forms channels that allow the passive diffusion of small hydrophilic solutes up to an exclusion limit of about 0.6 kDa. This chain is Porin (opmA), found in Fuscovulum blasticum (Rhodobacter blasticus).